We begin with the raw amino-acid sequence, 318 residues long: Olfactory receptor 51E1 (318 aa).

Over 1–31 (MMVDPNGNESSATYFILIGLPGLEEAQFWLA) the chain is Extracellular. Asparagine 8 is a glycosylation site (N-linked (GlcNAc...) asparagine). A helical transmembrane segment spans residues 32–52 (FPLCSLYLIAVLGNLTIIYIV). The Cytoplasmic segment spans residues 53 to 60 (RTEHSLHE). Residues 61-81 (PMYIFLCMLSGIDILISTSSM) form a helical membrane-spanning segment. At 82–100 (PKMLAIFWFNSTTIQFDAC) the chain is on the extracellular side. Asparagine 91 carries N-linked (GlcNAc...) asparagine glycosylation. Cysteines 100 and 182 form a disulfide. A helical transmembrane segment spans residues 101–123 (LLQMFAIHSLSGMESTVLLAMAF). Residues 124–145 (DRYVAICHPLRHATVLTLPRVT) lie on the Cytoplasmic side of the membrane. A helical membrane pass occupies residues 146–166 (KIGVAAVVRGAALMAPLPVFI). Over 167-198 (KQLPFCRSNILSHSYCLHQDVMKLACDDIRVN) the chain is Extracellular. A helical membrane pass occupies residues 199–219 (VVYGLIVIISAIGLDSLLISF). The Cytoplasmic segment spans residues 220 to 239 (SYLLILKTVLGLTREAQAKA). Residues 240-260 (FGTCVSHVCAVFIFYVPFIGL) form a helical membrane-spanning segment. Over 261 to 275 (SMVHRFSKRRDSPLP) the chain is Extracellular. The chain crosses the membrane as a helical span at residues 276 to 296 (VILANIYLLVPPVLNPIVYGV). Topologically, residues 297 to 318 (KTKEIRQRILRLFHVATHASEP) are cytoplasmic.

The protein belongs to the G-protein coupled receptor 1 family. As to expression, highly expressed in prostate. Very low levels may be detected in some other tissues, such as placenta, skeletal muscle, heart, ovary and testis. Up-regulated in prostate cancers.

It is found in the cell membrane. Odorant receptor. This Homo sapiens (Human) protein is Olfactory receptor 51E1 (OR51E1).